A 110-amino-acid chain; its full sequence is Plasma membrane ATPase (110 aa).

2 residues coordinate Mg(2+): D72 and D76. The segment at 88 to 110 (APESTSLNLPNDKELSEIAEQAK) is disordered. The span at 98–110 (NDKELSEIAEQAK) shows a compositional bias: basic and acidic residues.

It belongs to the cation transport ATPase (P-type) (TC 3.A.3) family. Type IIIA subfamily. In terms of processing, the N-terminus is blocked.

The protein localises to the cell membrane. The enzyme catalyses ATP + H2O + H(+)(in) = ADP + phosphate + 2 H(+)(out). In terms of biological role, the plasma membrane ATPase of plants and fungi is a hydrogen ion pump. The proton gradient it generates drives the active transport of nutrients by H(+)-symport. The resulting external acidification and/or internal alkinization may mediate growth responses. This chain is Plasma membrane ATPase, found in Avena sativa (Oat).